The sequence spans 319 residues: Acetyl-coenzyme A carboxylase carboxyl transferase subunit alpha (319 aa).

A CoA carboxyltransferase C-terminal domain is found at 35–296; the sequence is NLDEEVQRLR…KAQLLADLSD (262 aa).

The protein belongs to the AccA family. As to quaternary structure, acetyl-CoA carboxylase is a heterohexamer composed of biotin carboxyl carrier protein (AccB), biotin carboxylase (AccC) and two subunits each of ACCase subunit alpha (AccA) and ACCase subunit beta (AccD).

The protein localises to the cytoplasm. It carries out the reaction N(6)-carboxybiotinyl-L-lysyl-[protein] + acetyl-CoA = N(6)-biotinyl-L-lysyl-[protein] + malonyl-CoA. It functions in the pathway lipid metabolism; malonyl-CoA biosynthesis; malonyl-CoA from acetyl-CoA: step 1/1. Its function is as follows. Component of the acetyl coenzyme A carboxylase (ACC) complex. First, biotin carboxylase catalyzes the carboxylation of biotin on its carrier protein (BCCP) and then the CO(2) group is transferred by the carboxyltransferase to acetyl-CoA to form malonyl-CoA. The chain is Acetyl-coenzyme A carboxylase carboxyl transferase subunit alpha from Yersinia enterocolitica serotype O:8 / biotype 1B (strain NCTC 13174 / 8081).